The sequence spans 546 residues: Chaperonin GroEL (546 aa).

Residues 30-33 (TLGP), K51, 87-91 (DGTTT), G415, and D495 each bind ATP.

Belongs to the chaperonin (HSP60) family. As to quaternary structure, forms a cylinder of 14 subunits composed of two heptameric rings stacked back-to-back. Interacts with the co-chaperonin GroES.

Its subcellular location is the cytoplasm. The enzyme catalyses ATP + H2O + a folded polypeptide = ADP + phosphate + an unfolded polypeptide.. Its function is as follows. Together with its co-chaperonin GroES, plays an essential role in assisting protein folding. The GroEL-GroES system forms a nano-cage that allows encapsulation of the non-native substrate proteins and provides a physical environment optimized to promote and accelerate protein folding. The chain is Chaperonin GroEL from Alteromonas mediterranea (strain DSM 17117 / CIP 110805 / LMG 28347 / Deep ecotype).